The following is a 215-amino-acid chain: MSKVYDWFEERLEIQAIADDITSKYVPPHVNIFYCLGGITLTCFLVQVATGFAMTFYYRPTVTEAFASVQYIMTEANFGWLIRSVHRWSASMMVLMMILHVFRVYLTGGFKKPRELTWVTGVVLAVLTASFGVTGYSLPWDQVGYWAVKIVTGVPDAIPVIGSPLVELLRGSASVGQSTLTRFYSLHTFVLPLLTAVFMLMHFLMIRKQGISGPL.

A helical membrane pass occupies residues 32–52; sequence IFYCLGGITLTCFLVQVATGF. C35 is a heme c binding site. The heme b site is built by H86 and H100. 3 consecutive transmembrane segments (helical) span residues 90–110, 116–136, and 186–206; these read ASMM…TGGF, LTWV…VTGY, and LHTF…FLMI. 2 residues coordinate heme b: H187 and H202.

It belongs to the cytochrome b family. PetB subfamily. The 4 large subunits of the cytochrome b6-f complex are cytochrome b6, subunit IV (17 kDa polypeptide, PetD), cytochrome f and the Rieske protein, while the 4 small subunits are PetG, PetL, PetM and PetN. The complex functions as a dimer. The cofactor is heme b. It depends on heme c as a cofactor.

Its subcellular location is the plastid. It localises to the chloroplast thylakoid membrane. Component of the cytochrome b6-f complex, which mediates electron transfer between photosystem II (PSII) and photosystem I (PSI), cyclic electron flow around PSI, and state transitions. The sequence is that of Cytochrome b6 from Nicotiana tabacum (Common tobacco).